We begin with the raw amino-acid sequence, 174 residues long: Ribosome maturation factor RimM (174 aa).

Residues 96 to 169 (KDTFFICDLI…KMVVDLPQGL (74 aa)) form the PRC barrel domain.

This sequence belongs to the RimM family. As to quaternary structure, binds ribosomal protein uS19.

The protein resides in the cytoplasm. An accessory protein needed during the final step in the assembly of 30S ribosomal subunit, possibly for assembly of the head region. Essential for efficient processing of 16S rRNA. May be needed both before and after RbfA during the maturation of 16S rRNA. It has affinity for free ribosomal 30S subunits but not for 70S ribosomes. The protein is Ribosome maturation factor RimM of Acetivibrio thermocellus (strain ATCC 27405 / DSM 1237 / JCM 9322 / NBRC 103400 / NCIMB 10682 / NRRL B-4536 / VPI 7372) (Clostridium thermocellum).